A 122-amino-acid polypeptide reads, in one-letter code: MSLTKEQILDAISNMSVMDIVRLTSMMEEKFGVSTASLTTVEPDTSEAIVEEQTEFNVFLTAIGNNKIPVIKTVRSITGLGLKEAKELVESAPVILKESINKDDAETLKKTLETVGASVEIK.

Belongs to the bacterial ribosomal protein bL12 family. As to quaternary structure, homodimer. Part of the ribosomal stalk of the 50S ribosomal subunit. Forms a multimeric L10(L12)X complex, where L10 forms an elongated spine to which 2 to 4 L12 dimers bind in a sequential fashion. Binds GTP-bound translation factors.

Forms part of the ribosomal stalk which helps the ribosome interact with GTP-bound translation factors. Is thus essential for accurate translation. This Blochmanniella pennsylvanica (strain BPEN) protein is Large ribosomal subunit protein bL12.